The chain runs to 173 residues: Chorion class B protein Ld32 (173 aa).

Positions 1-7 (FVQSALS) are cleaved as a signal peptide.

Belongs to the chorion protein family.

This protein is one of many from the eggshell of the gypsy moth. This is Chorion class B protein Ld32 from Lymantria dispar (Gypsy moth).